We begin with the raw amino-acid sequence, 110 residues long: MKKLVSSVILALILFGFSWVSPAFAGDAGNGSKVFSANCNACHLGGKNVVNAAKTLNKSDLEKYAMLDLEAIKTQVTNGKGAMPAFGKRLTPDQIEDVATYVLEKAEKGW.

The first 25 residues, methionine 1–alanine 25, serve as a signal peptide directing secretion. Heme c contacts are provided by cysteine 39, cysteine 42, histidine 43, and methionine 83.

The protein belongs to the cytochrome c family. PetJ subfamily. In terms of assembly, monomer. In terms of processing, binds 1 heme c group covalently per subunit.

The protein localises to the cellular thylakoid lumen. Functions as an electron carrier between membrane-bound cytochrome b6-f and photosystem I in oxygenic photosynthesis. This is Cytochrome c6 from Gloeothece citriformis (strain PCC 7424) (Cyanothece sp. (strain PCC 7424)).